The chain runs to 432 residues: Serine/threonine-protein kinase stk11 (432 aa).

Residues 52–312 (YLMGDLLGEG…IQQIRQHNWF (261 aa)) form the Protein kinase domain. ATP contacts are provided by residues 58–66 (LGEGSYGKV) and Lys81. The active-site Proton acceptor is the Asp179. Thr192 carries the post-translational modification Phosphothreonine; by autocatalysis. Residues 398 to 432 (TESQLKTERRVSSSSQRKASTTGSKVRKLSACKQQ) are disordered. Residues 409 to 421 (SSSSQRKASTTGS) are compositionally biased toward polar residues. Basic residues predominate over residues 422-432 (KVRKLSACKQQ). Phosphoserine; by PKA is present on Ser427.

It belongs to the protein kinase superfamily. CAMK Ser/Thr protein kinase family. LKB1 subfamily. Catalytic component of a trimeric complex composed of STK11/LKB1, STRAD (STRADA or STRADB) and CAB39/MO25 (CAB39/MO25alpha or CAB39L/MO25beta). Mg(2+) serves as cofactor. Requires Mn(2+) as cofactor. Phosphorylated by a cAMP-dependent protein kinase. Autophosphorylated in a reaction that prefers Mn(2+) to Mg(2+). As to expression, oocytes, eggs and early embryos.

It is found in the nucleus. It localises to the cytoplasm. The enzyme catalyses L-seryl-[protein] + ATP = O-phospho-L-seryl-[protein] + ADP + H(+). The catalysed reaction is L-threonyl-[protein] + ATP = O-phospho-L-threonyl-[protein] + ADP + H(+). Its function is as follows. Tumor suppressor serine/threonine-protein kinase that controls the activity of AMP-activated protein kinase (AMPK) family members, thereby playing a role in various processes such as cell metabolism, cell polarity, apoptosis and DNA damage response. Acts by phosphorylating the T-loop of AMPK family proteins, leading to promote their activity. The protein is Serine/threonine-protein kinase stk11 of Xenopus laevis (African clawed frog).